Reading from the N-terminus, the 170-residue chain is Lipoprotein signal peptidase (170 aa).

3 helical membrane passes run 9 to 29 (IGSV…KYLV), 72 to 92 (LFFL…ILKE), and 93 to 113 (TNKI…GNII). Residues D124 and D146 contribute to the active site. The chain crosses the membrane as a helical span at residues 142-162 (FNFADSYVVIGITLFIIYDLF).

The protein belongs to the peptidase A8 family.

The protein resides in the cell inner membrane. The enzyme catalyses Release of signal peptides from bacterial membrane prolipoproteins. Hydrolyzes -Xaa-Yaa-Zaa-|-(S,diacylglyceryl)Cys-, in which Xaa is hydrophobic (preferably Leu), and Yaa (Ala or Ser) and Zaa (Gly or Ala) have small, neutral side chains.. The protein operates within protein modification; lipoprotein biosynthesis (signal peptide cleavage). Functionally, this protein specifically catalyzes the removal of signal peptides from prolipoproteins. This chain is Lipoprotein signal peptidase, found in Borrelia hermsii (strain HS1 / DAH).